A 104-amino-acid chain; its full sequence is Large ribosomal subunit protein uL24 (104 aa).

Belongs to the universal ribosomal protein uL24 family. In terms of assembly, part of the 50S ribosomal subunit.

One of two assembly initiator proteins, it binds directly to the 5'-end of the 23S rRNA, where it nucleates assembly of the 50S subunit. Functionally, one of the proteins that surrounds the polypeptide exit tunnel on the outside of the subunit. This is Large ribosomal subunit protein uL24 from Maricaulis maris (strain MCS10) (Caulobacter maris).